The chain runs to 5405 residues: IgGFc-binding protein (5405 aa).

Residues 1-23 form the signal peptide; the sequence is MGALWSWWILWAGATLLWGLTQE. Residues 24–450 form an igGFc-binding region; the sequence is ASVDLKNTGR…EPSCEGMQCA (427 aa). N-linked (GlcNAc...) asparagine glycosylation is found at asparagine 75 and asparagine 91. Residues 470-650 form the VWFD 1 domain; the sequence is AVCRAQGDPH…KLDDGDYLCE (181 aa). Disulfide bonds link cysteine 472/cysteine 611 and cysteine 494/cysteine 649. One can recognise a TIL 1 domain in the interval 745 to 799; the sequence is CPANSRYELCGPACPTSCNGAAAPSNCSGRPCVEGCVCLPGFVASGGACVPASSC. Residues 862–1041 enclose the VWFD 2 domain; it reads GTCQGSGDPH…WQEETRPGCG (180 aa). Intrachain disulfides connect cysteine 864–cysteine 1003 and cysteine 886–cysteine 1040. The region spanning 1136–1189 is the TIL 2 domain; it reads CPPHSHYEACSYGCPLSCGDLPVPGGCGSECHEGCVCDEGFALSGESCLPLASC. Residues 1250–1429 enclose the VWFD 3 domain; sequence STCQASGDPH…EEVVPDSPCL (180 aa). 2 cysteine pairs are disulfide-bonded: cysteine 1252–cysteine 1390 and cysteine 1274–cysteine 1428. Asparagine 1317 carries N-linked (GlcNAc...) (complex) asparagine glycosylation. The 54-residue stretch at 1532-1585 folds into the TIL 3 domain; that stretch reads CPPNSHYELCADTCSLGCSALSAPPQCQDGCAEGCQCDSGFLYNGQACVPIQQC. The region spanning 1671–1854 is the VWFD 4 domain; that stretch reads ATCWLWGDPH…RAPGWDPLCW (184 aa). Intrachain disulfides connect cysteine 1673/cysteine 1815, cysteine 1695/cysteine 1853, and cysteine 1704/cysteine 1812. Asparagine 1743 carries N-linked (GlcNAc...) asparagine glycosylation. The TIL 4 domain maps to 1950 to 2007; it reads CPENSHYEVCGSPCPASCPSPAPLTTPAVCEGPCVEGCQCDAGFVLSADRCVPLNNGC. A VWFD 5 domain is found at 2070–2253; it reads AECQAWGDPH…VSKPCPSPCT (184 aa). 2 disulfides stabilise this stretch: cysteine 2072–cysteine 2211 and cysteine 2094–cysteine 2252. An N-linked (GlcNAc...) asparagine glycan is attached at asparagine 2138. Residues 2337–2390 form the TIL 5 domain; that stretch reads CPAHSHYELCGDSCPGSCPSLSAPEGCESACREGCVCDAGFVLSGDTCVPVGQC. Residues 2451 to 2630 form the VWFD 6 domain; that stretch reads TTCQASGDPH…EEVVPDSPCL (180 aa). Intrachain disulfides connect cysteine 2453/cysteine 2591 and cysteine 2475/cysteine 2629. A glycan (N-linked (GlcNAc...) asparagine) is linked at asparagine 2518. Positions 2733 to 2786 constitute a TIL 6 domain; sequence CPQNSHYELCADTCSLGCSALSAPLQCPDGCAEGCQCDSGFLYNGQACVPIQQC. One can recognise a VWFD 7 domain in the interval 2872–3055; that stretch reads ATCWLWGDPH…RAPGWDPLCW (184 aa). Cystine bridges form between cysteine 2874–cysteine 3016, cysteine 2896–cysteine 3054, and cysteine 2905–cysteine 3013. Residues 3151 to 3208 enclose the TIL 7 domain; the sequence is CPENSHYEVCGPPCPASCPSPAPLTTPAVCEGPCVEGCQCDAGFVLSADRCVPLNNGC. The 184-residue stretch at 3271-3454 folds into the VWFD 8 domain; sequence AECQAWGDPH…VSKPCPSPCT (184 aa). 2 cysteine pairs are disulfide-bonded: cysteine 3273–cysteine 3412 and cysteine 3295–cysteine 3453. In terms of domain architecture, TIL 8 spans 3538–3591; it reads CPAHSHYELCGDSCPGSCPSLSAPEGCESACREGCVCDAGFVLSGDTCVPVGQC. Positions 3652-3831 constitute a VWFD 9 domain; sequence TTCQASGDPH…EEVVPDSPCL (180 aa). Intrachain disulfides connect cysteine 3654-cysteine 3792 and cysteine 3676-cysteine 3830. The N-linked (GlcNAc...) asparagine glycan is linked to asparagine 3719. Positions 3934-3987 constitute a TIL 9 domain; the sequence is CPQNSHYELCADTCSLGCSALSAPLQCPDGCAEGCQCDSGFLYNGQACVPIQQC. The VWFD 10 domain occupies 4073 to 4256; it reads ATCWLWGDPH…RAPGWDPLCW (184 aa). 3 disulfides stabilise this stretch: cysteine 4075–cysteine 4217, cysteine 4097–cysteine 4255, and cysteine 4106–cysteine 4214. The N-linked (GlcNAc...) asparagine glycan is linked to asparagine 4145. The TIL 10 domain occupies 4352–4409; sequence CPENSHYEVCGPPCPASCPSPAPLTTPAVCEGPCVEGCQCDAGFVLSADRCVPLNNGC. The region spanning 4472–4655 is the VWFD 11 domain; that stretch reads AECQAWGDPH…VSKPCPSPCT (184 aa). Intrachain disulfides connect cysteine 4474/cysteine 4613 and cysteine 4496/cysteine 4654. N-linked (GlcNAc...) asparagine glycosylation is present at asparagine 4540. The TIL 11 domain occupies 4739 to 4792; that stretch reads CPAHSHYELCGDSCPVSCPSLSAPEGCESACREGCVCDAGFVLSGDTCVPVGQC. Positions 4854–5025 constitute a VWFD 12 domain; it reads GRCLANGGIH…RAPGSSKGCG (172 aa). 2 cysteine pairs are disulfide-bonded: cysteine 4856–cysteine 4986 and cysteine 4878–cysteine 5024. The TIL 12 domain maps to 5121-5174; the sequence is CPAHSHYSICTRTCQGSCAALSGLTGCTTRCFEGCECDDRFLLSQGVCIPVQDC. In terms of domain architecture, VWFD 13 spans 5233 to 5404; that stretch reads GLCVLSVGAN…WRAQDFSPCY (172 aa). Cysteine 5235 and cysteine 5372 form a disulfide bridge.

Interacts with the Fc portion of IgG and with MUC2. As to expression, mainly expressed in placenta and colon epithelium. Expressed in thyroid, and down-regulated in thyroid carcinomas. Present in serum, with higher levels in patients with various autoimmune diseases (at protein level).

It localises to the secreted. Functionally, may be involved in the maintenance of the mucosal structure as a gel-like component of the mucosa. In Homo sapiens (Human), this protein is IgGFc-binding protein (FCGBP).